A 501-amino-acid polypeptide reads, in one-letter code: ATP synthase subunit alpha (501 aa).

169–176 (GDRQTGKT) is an ATP binding site.

It belongs to the ATPase alpha/beta chains family. F-type ATPases have 2 components, CF(1) - the catalytic core - and CF(0) - the membrane proton channel. CF(1) has five subunits: alpha(3), beta(3), gamma(1), delta(1), epsilon(1). CF(0) has three main subunits: a(1), b(2) and c(9-12). The alpha and beta chains form an alternating ring which encloses part of the gamma chain. CF(1) is attached to CF(0) by a central stalk formed by the gamma and epsilon chains, while a peripheral stalk is formed by the delta and b chains.

The protein localises to the cell membrane. It catalyses the reaction ATP + H2O + 4 H(+)(in) = ADP + phosphate + 5 H(+)(out). In terms of biological role, produces ATP from ADP in the presence of a proton gradient across the membrane. The alpha chain is a regulatory subunit. In Streptococcus pneumoniae serotype 19F (strain G54), this protein is ATP synthase subunit alpha.